We begin with the raw amino-acid sequence, 89 residues long: Small ribosomal subunit protein uS15 (89 aa).

It belongs to the universal ribosomal protein uS15 family. As to quaternary structure, part of the 30S ribosomal subunit. Forms a bridge to the 50S subunit in the 70S ribosome, contacting the 23S rRNA.

One of the primary rRNA binding proteins, it binds directly to 16S rRNA where it helps nucleate assembly of the platform of the 30S subunit by binding and bridging several RNA helices of the 16S rRNA. Functionally, forms an intersubunit bridge (bridge B4) with the 23S rRNA of the 50S subunit in the ribosome. This Parafrankia sp. (strain EAN1pec) protein is Small ribosomal subunit protein uS15.